A 160-amino-acid chain; its full sequence is Serine-protein kinase RsbW (160 aa).

The protein belongs to the anti-sigma-factor family.

The catalysed reaction is L-seryl-[protein] + ATP = O-phospho-L-seryl-[protein] + ADP + H(+). The enzyme catalyses L-threonyl-[protein] + ATP = O-phospho-L-threonyl-[protein] + ADP + H(+). Its function is as follows. Negative regulator of sigma-B activity. Phosphorylates and inactivates its specific antagonist protein, RsbV. Upon phosphorylation of RsbV, RsbW is released and binds to sigma-B, thereby blocking its ability to form an RNA polymerase holoenzyme (E-sigma-B). The sequence is that of Serine-protein kinase RsbW from Bacillus thuringiensis (strain Al Hakam).